The chain runs to 669 residues: DNA ligase (669 aa).

Residues 34 to 38 (DAEYD), 83 to 84 (SL), and glutamate 117 contribute to the NAD(+) site. The active-site N6-AMP-lysine intermediate is the lysine 119. NAD(+) contacts are provided by arginine 140, glutamate 177, lysine 293, and lysine 317. Zn(2+) is bound by residues cysteine 411, cysteine 414, cysteine 429, and cysteine 434. In terms of domain architecture, BRCT spans 591-669 (RLGGRFTGKT…EDEFLKMLEG (79 aa)).

The protein belongs to the NAD-dependent DNA ligase family. LigA subfamily. Requires Mg(2+) as cofactor. It depends on Mn(2+) as a cofactor.

It carries out the reaction NAD(+) + (deoxyribonucleotide)n-3'-hydroxyl + 5'-phospho-(deoxyribonucleotide)m = (deoxyribonucleotide)n+m + AMP + beta-nicotinamide D-nucleotide.. Its function is as follows. DNA ligase that catalyzes the formation of phosphodiester linkages between 5'-phosphoryl and 3'-hydroxyl groups in double-stranded DNA using NAD as a coenzyme and as the energy source for the reaction. It is essential for DNA replication and repair of damaged DNA. This is DNA ligase from Geotalea daltonii (strain DSM 22248 / JCM 15807 / FRC-32) (Geobacter daltonii).